Reading from the N-terminus, the 88-residue chain is Large ribosomal subunit protein eL31 (88 aa).

Belongs to the eukaryotic ribosomal protein eL31 family.

The sequence is that of Large ribosomal subunit protein eL31 (rpl31e) from Archaeoglobus fulgidus (strain ATCC 49558 / DSM 4304 / JCM 9628 / NBRC 100126 / VC-16).